Consider the following 358-residue polypeptide: Uroporphyrinogen decarboxylase (358 aa).

Residues 36–40 (RQAGR), Asp85, Tyr160, Ser215, and His338 each bind substrate.

Belongs to the uroporphyrinogen decarboxylase family. In terms of assembly, homodimer.

The protein resides in the cytoplasm. It catalyses the reaction uroporphyrinogen III + 4 H(+) = coproporphyrinogen III + 4 CO2. It participates in porphyrin-containing compound metabolism; protoporphyrin-IX biosynthesis; coproporphyrinogen-III from 5-aminolevulinate: step 4/4. Catalyzes the decarboxylation of four acetate groups of uroporphyrinogen-III to yield coproporphyrinogen-III. The polypeptide is Uroporphyrinogen decarboxylase (Corynebacterium glutamicum (strain ATCC 13032 / DSM 20300 / JCM 1318 / BCRC 11384 / CCUG 27702 / LMG 3730 / NBRC 12168 / NCIMB 10025 / NRRL B-2784 / 534)).